The sequence spans 428 residues: 3-phosphoshikimate 1-carboxyvinyltransferase (428 aa).

Residues Lys22, Ser23, and Arg27 each contribute to the 3-phosphoshikimate site. Lys22 is a phosphoenolpyruvate binding site. Phosphoenolpyruvate-binding residues include Gly96 and Arg124. Residues Ser169, Ser170, Gln171, Ser197, Asp313, Asn336, and Lys340 each coordinate 3-phosphoshikimate. Gln171 provides a ligand contact to phosphoenolpyruvate. Asp313 (proton acceptor) is an active-site residue. Residues Arg344, Arg386, and Lys411 each contribute to the phosphoenolpyruvate site.

Belongs to the EPSP synthase family. As to quaternary structure, monomer.

The protein resides in the cytoplasm. It catalyses the reaction 3-phosphoshikimate + phosphoenolpyruvate = 5-O-(1-carboxyvinyl)-3-phosphoshikimate + phosphate. It functions in the pathway metabolic intermediate biosynthesis; chorismate biosynthesis; chorismate from D-erythrose 4-phosphate and phosphoenolpyruvate: step 6/7. Its function is as follows. Catalyzes the transfer of the enolpyruvyl moiety of phosphoenolpyruvate (PEP) to the 5-hydroxyl of shikimate-3-phosphate (S3P) to produce enolpyruvyl shikimate-3-phosphate and inorganic phosphate. In Proteus mirabilis (strain HI4320), this protein is 3-phosphoshikimate 1-carboxyvinyltransferase.